The primary structure comprises 145 residues: Natriuretic peptides A (145 aa).

A signal peptide spans 1–23 (MGTSFVGYLTFVLLLLALTKVRG). The propeptide occupies 24–117 (GPAYNSPLSS…KLRELLNAPR (94 aa)). Residues C125 and C141 are joined by a disulfide bond.

Belongs to the natriuretic peptide family. Cleaved upon secretion to produce the functional hormone.

Its subcellular location is the secreted. Functionally, hormone playing a key role in cardiovascular homeostasis through regulation of natriuresis, diuresis, and vasodilation. Has a cGMP-stimulating activity. The sequence is that of Natriuretic peptides A from Aquarana catesbeiana (American bullfrog).